The sequence spans 82 residues: Sec-independent protein translocase protein TatA (82 aa).

The helical transmembrane segment at 1–21 threads the bilayer; it reads MGGISIWQLLIIAVIVVLLFG.

This sequence belongs to the TatA/E family. The Tat system comprises two distinct complexes: a TatABC complex, containing multiple copies of TatA, TatB and TatC subunits, and a separate TatA complex, containing only TatA subunits. Substrates initially bind to the TatABC complex, which probably triggers association of the separate TatA complex to form the active translocon.

It localises to the cell inner membrane. In terms of biological role, part of the twin-arginine translocation (Tat) system that transports large folded proteins containing a characteristic twin-arginine motif in their signal peptide across membranes. TatA could form the protein-conducting channel of the Tat system. This chain is Sec-independent protein translocase protein TatA, found in Vibrio cholerae serotype O1 (strain ATCC 39315 / El Tor Inaba N16961).